A 520-amino-acid chain; its full sequence is 2-isopropylmalate synthase (520 aa).

Positions 5–267 (VIIFDTTLRD…HTNINHQEIY (263 aa)) constitute a Pyruvate carboxyltransferase domain. Positions 14, 202, 204, and 238 each coordinate Mn(2+). The segment at 392 to 520 (RLDYFSVQSG…RLQQNNQEMV (129 aa)) is regulatory domain.

This sequence belongs to the alpha-IPM synthase/homocitrate synthase family. LeuA type 1 subfamily. As to quaternary structure, homodimer. The cofactor is Mn(2+).

The protein localises to the cytoplasm. It catalyses the reaction 3-methyl-2-oxobutanoate + acetyl-CoA + H2O = (2S)-2-isopropylmalate + CoA + H(+). It participates in amino-acid biosynthesis; L-leucine biosynthesis; L-leucine from 3-methyl-2-oxobutanoate: step 1/4. Functionally, catalyzes the condensation of the acetyl group of acetyl-CoA with 3-methyl-2-oxobutanoate (2-ketoisovalerate) to form 3-carboxy-3-hydroxy-4-methylpentanoate (2-isopropylmalate). The polypeptide is 2-isopropylmalate synthase (Yersinia pseudotuberculosis serotype O:1b (strain IP 31758)).